A 153-amino-acid chain; its full sequence is Large ribosomal subunit protein uL13 (153 aa).

Positions 134–153 (EAQQPQALDVGSLNRKNVSA) are disordered.

This sequence belongs to the universal ribosomal protein uL13 family. In terms of assembly, part of the 50S ribosomal subunit.

In terms of biological role, this protein is one of the early assembly proteins of the 50S ribosomal subunit, although it is not seen to bind rRNA by itself. It is important during the early stages of 50S assembly. This chain is Large ribosomal subunit protein uL13, found in Methylorubrum extorquens (strain CM4 / NCIMB 13688) (Methylobacterium extorquens).